Here is a 1811-residue protein sequence, read N- to C-terminus: ADP-ribosylation factor guanine nucleotide-exchange factor sec71 (1811 aa).

Disordered regions lie at residues 1–108 (MTDL…TSEA) and 316–336 (INMN…PIPS). Basic and acidic residues-rich tracts occupy residues 33–49 (STIK…HDSI), 57–73 (KSIE…KDIE), and 80–91 (PPEDDLDSRSIE). Ser40 carries the phosphoserine modification. Polar residues-rich tracts occupy residues 92–108 (SEQT…TSEA) and 316–326 (INMNKSSSNGT). At Thr326 the chain carries Phosphothreonine. Phosphoserine is present on residues Ser332 and Ser353. The HUS box signature appears at 533 to 537 (NYDCI). Basic and acidic residues predominate over residues 643 to 663 (TAKDDETESTSKGEEPQKSKS). The interval 643–688 (TAKDDETESTSKGEEPQKSKSEPPSAGINSTSMDNLESSGQALATD) is disordered. A compositionally biased stretch (polar residues) spans 669–688 (GINSTSMDNLESSGQALATD). In terms of domain architecture, SEC7 spans 692-880 (QFENLKHRKK…TEVYEEIQKN (189 aa)). Position 741 is a phosphoserine (Ser741). Thr742 bears the Phosphothreonine mark. Position 812 (Asp812) interacts with Mg(2+). The tract at residues 889–1103 (DPTSNFPEIP…TTKPLRKSLD (215 aa)) is HDS1 domain.

It is found in the cytoplasm. The protein resides in the golgi apparatus. Its subcellular location is the trans-Golgi network. It localises to the cytoplasmic vesicle. The protein localises to the COPI-coated vesicle membrane. It is found in the COPII-coated vesicle membrane. Guanine exchange factor that acts as an activator of arf1 at the trans-Golgi net-work and is thus involved in vesicular budding and traffic between compartments of the Golgi apparatus. Activation of Arf (ADP-ribosylation factor) GTPases is essential for vesicle formation via recruitment of cargo adapters and coat proteins necessary for Golgi trafficking. Involved in tunicamycin-induced ER stress response and subsequent apoptosis. The protein is ADP-ribosylation factor guanine nucleotide-exchange factor sec71 of Schizosaccharomyces pombe (strain 972 / ATCC 24843) (Fission yeast).